The sequence spans 524 residues: Na(+)/H(+) antiporter NhaB (524 aa).

The next 13 membrane-spanning stretches (helical) occupy residues Leu-23–Val-43, Gly-45–Leu-65, Leu-98–Phe-118, Cys-136–Ile-156, Leu-203–Pro-223, Phe-239–Ile-259, Ala-304–Val-324, Gly-325–Gly-345, Leu-358–Ile-378, Leu-392–Val-412, Ala-420–Thr-440, Ala-448–Ile-468, and Ala-479–Val-499.

The protein belongs to the NhaB Na(+)/H(+) (TC 2.A.34) antiporter family.

Its subcellular location is the cell inner membrane. The catalysed reaction is 2 Na(+)(in) + 3 H(+)(out) = 2 Na(+)(out) + 3 H(+)(in). Na(+)/H(+) antiporter that extrudes sodium in exchange for external protons. The protein is Na(+)/H(+) antiporter NhaB of Yersinia enterocolitica serotype O:8 / biotype 1B (strain NCTC 13174 / 8081).